The following is a 90-amino-acid chain: Potassium channel toxin BmTXK-beta (90 aa).

The first 22 residues, 1 to 22 (MMKQQFFLFLAVIVMISSVIEA), serve as a signal peptide directing secretion. A propeptide spanning residues 23–29 (GRGKEIM) is cleaved from the precursor. The BetaSPN-type CS-alpha/beta domain maps to 55-90 (EYACPVIEKWCEDHCAAKKAIGKCEDTECKCLKLRK). 3 cysteine pairs are disulfide-bonded: C58–C78, C65–C83, and C69–C85.

It belongs to the long chain scorpion toxin family. Class 2 subfamily. As to expression, expressed by the venom gland.

It localises to the secreted. Its function is as follows. This recombinant peptide reversibly and dose-dependently inhibits the transient outward potassium current (I(To)) of rabbit atrial myocyte and prolongs the action potential duration of rabbit atrial myocyte without affecting the action potential amplitude. Thus, the voltage-gated potassium channels Kv4.1/KCND1, Kv4.2/KCND2, Kv4.3/KCND3 may be the target of this toxin. This Olivierus martensii (Manchurian scorpion) protein is Potassium channel toxin BmTXK-beta.